We begin with the raw amino-acid sequence, 570 residues long: Formate--tetrahydrofolate ligase (570 aa).

65-72 serves as a coordination point for ATP; that stretch reads TPFGEGKT.

It belongs to the formate--tetrahydrofolate ligase family.

The catalysed reaction is (6S)-5,6,7,8-tetrahydrofolate + formate + ATP = (6R)-10-formyltetrahydrofolate + ADP + phosphate. The protein operates within one-carbon metabolism; tetrahydrofolate interconversion. The polypeptide is Formate--tetrahydrofolate ligase (Shewanella halifaxensis (strain HAW-EB4)).